The sequence spans 334 residues: MSNMQFSRGFNPFVILFCLAVVAPIISADVAILRTDYYQKTCPDFHKIVREAVTTKQVQQPTTAAGTLRLFFHDCFLEGCDASVLIATNSFNKAERDDDLNDSLPGDAFDIVTRIKTALELSCPGVVSCADILAQATRDLVTMVGGPYFDVKLGRKDGFESKAHKVRGNVPMANQTVPDIHGIFKKNGFSLREMVALSGAHTIGFSHCKEFSDRLYGSRADKEINPRFAAALKDLCKNHTVDDTIAAFNDVMTPGKFDNMYFKNLKRGLGLLASDHILIKDNSTKPFVDLYATNETAFFEDFARAMEKLGTVGVKGDKDGEVRRRCDHFNNLNV.

The signal sequence occupies residues 1 to 28 (MSNMQFSRGFNPFVILFCLAVVAPIISA). 4 cysteine pairs are disulfide-bonded: Cys42/Cys123, Cys75/Cys80, Cys129/Cys326, and Cys208/Cys236. Catalysis depends on His73, which acts as the Proton acceptor. Residues Asp74, Gly79, Asp81, and Ser83 each contribute to the Ca(2+) site. Pro171 lines the substrate pocket. Asn174 is a glycosylation site (N-linked (GlcNAc...) asparagine). A heme b-binding site is contributed by His201. Thr202 provides a ligand contact to Ca(2+). A glycan (N-linked (GlcNAc...) asparagine) is linked at Asn238. Ca(2+)-binding residues include Asp250, Thr253, and Asp258. Residues Asn282 and Asn294 are each glycosylated (N-linked (GlcNAc...) asparagine).

Belongs to the peroxidase family. Classical plant (class III) peroxidase subfamily. The cofactor is heme b. Ca(2+) is required as a cofactor.

The protein localises to the secreted. It carries out the reaction 2 a phenolic donor + H2O2 = 2 a phenolic radical donor + 2 H2O. In terms of biological role, removal of H(2)O(2), oxidation of toxic reductants, biosynthesis and degradation of lignin, suberization, auxin catabolism, response to environmental stresses such as wounding, pathogen attack and oxidative stress. These functions might be dependent on each isozyme/isoform in each plant tissue. The protein is Peroxidase 65 (PER65) of Arabidopsis thaliana (Mouse-ear cress).